The following is a 154-amino-acid chain: Golgi-associated plant pathogenesis-related protein 1 (154 aa).

The disordered stretch occupies residues 1-21; sequence MGKSASKQFHNEVLKAHNEYR. The N-myristoyl glycine moiety is linked to residue G2. Residues 9 to 21 show a composition bias toward basic and acidic residues; sequence FHNEVLKAHNEYR. An SCP domain is found at 14–132; the sequence is LKAHNEYRQK…SDGSSFVVAR (119 aa). The stretch at 30-53 forms a coiled coil; it reads KLCKNLNREAQQYSEALASTRILK. The segment at 91–98 is interaction with CAV1; it reads NFQQPGFT.

This sequence belongs to the CRISP family. Homodimer. Interacts with CAV1. In terms of tissue distribution, highest expression in lung and peripheral leukocytes, and minor expression in liver and kidney.

The protein localises to the golgi apparatus membrane. In Homo sapiens (Human), this protein is Golgi-associated plant pathogenesis-related protein 1 (GLIPR2).